The sequence spans 1417 residues: DNA-directed RNA polymerase subunit beta' (1417 aa).

Zn(2+) is bound by residues cysteine 68, cysteine 70, cysteine 83, and cysteine 86. Residues aspartate 458, aspartate 460, and aspartate 462 each contribute to the Mg(2+) site. Zn(2+) contacts are provided by cysteine 811, cysteine 884, cysteine 891, and cysteine 894.

This sequence belongs to the RNA polymerase beta' chain family. In terms of assembly, the RNAP catalytic core consists of 2 alpha, 1 beta, 1 beta' and 1 omega subunit. When a sigma factor is associated with the core the holoenzyme is formed, which can initiate transcription. The cofactor is Mg(2+). Requires Zn(2+) as cofactor.

It carries out the reaction RNA(n) + a ribonucleoside 5'-triphosphate = RNA(n+1) + diphosphate. In terms of biological role, DNA-dependent RNA polymerase catalyzes the transcription of DNA into RNA using the four ribonucleoside triphosphates as substrates. In Francisella tularensis subsp. novicida (strain U112), this protein is DNA-directed RNA polymerase subunit beta'.